Reading from the N-terminus, the 340-residue chain is Holliday junction branch migration complex subunit RuvB (340 aa).

Residues 1–184 (MNENLDPTTK…FGISSRLQYY (184 aa)) are large ATPase domain (RuvB-L). ATP-binding positions include L23, R24, G65, K68, T69, T70, 131-133 (EDF), R174, Y184, and R221. T69 serves as a coordination point for Mg(2+). The tract at residues 185–255 (STELLTTIVE…ISKYALKALN (71 aa)) is small ATPAse domain (RuvB-S). A head domain (RuvB-H) region spans residues 258–340 (AHGLDEMDNK…INTNIQGGLF (83 aa)). Positions 313 and 318 each coordinate DNA.

Belongs to the RuvB family. In terms of assembly, homohexamer. Forms an RuvA(8)-RuvB(12)-Holliday junction (HJ) complex. HJ DNA is sandwiched between 2 RuvA tetramers; dsDNA enters through RuvA and exits via RuvB. An RuvB hexamer assembles on each DNA strand where it exits the tetramer. Each RuvB hexamer is contacted by two RuvA subunits (via domain III) on 2 adjacent RuvB subunits; this complex drives branch migration. In the full resolvosome a probable DNA-RuvA(4)-RuvB(12)-RuvC(2) complex forms which resolves the HJ.

It is found in the cytoplasm. The enzyme catalyses ATP + H2O = ADP + phosphate + H(+). In terms of biological role, the RuvA-RuvB-RuvC complex processes Holliday junction (HJ) DNA during genetic recombination and DNA repair, while the RuvA-RuvB complex plays an important role in the rescue of blocked DNA replication forks via replication fork reversal (RFR). RuvA specifically binds to HJ cruciform DNA, conferring on it an open structure. The RuvB hexamer acts as an ATP-dependent pump, pulling dsDNA into and through the RuvAB complex. RuvB forms 2 homohexamers on either side of HJ DNA bound by 1 or 2 RuvA tetramers; 4 subunits per hexamer contact DNA at a time. Coordinated motions by a converter formed by DNA-disengaged RuvB subunits stimulates ATP hydrolysis and nucleotide exchange. Immobilization of the converter enables RuvB to convert the ATP-contained energy into a lever motion, pulling 2 nucleotides of DNA out of the RuvA tetramer per ATP hydrolyzed, thus driving DNA branch migration. The RuvB motors rotate together with the DNA substrate, which together with the progressing nucleotide cycle form the mechanistic basis for DNA recombination by continuous HJ branch migration. Branch migration allows RuvC to scan DNA until it finds its consensus sequence, where it cleaves and resolves cruciform DNA. This Flavobacterium johnsoniae (strain ATCC 17061 / DSM 2064 / JCM 8514 / BCRC 14874 / CCUG 350202 / NBRC 14942 / NCIMB 11054 / UW101) (Cytophaga johnsonae) protein is Holliday junction branch migration complex subunit RuvB.